The chain runs to 978 residues: MELGPPLVLLLATVWHGQGAPVIEPSGPELVVEPGETVTLRCVSNGSVEWDGPISPYWTLDPESPGSTLTTRNATFKNTGTYRCTELEDPMAGSTTIHLYVKDPAHSWNLLAQEVTVVEGQEAVLPCLITDPALKDSVSLMREGGRQVLRKTVYFFSAWRGFIIRKAKVLDSNTYVCKTMVNGRESTSTGIWLKVNRVHPEPPQIKLEPSKLVRIRGEAAQIVCSATNAEVGFNVILKRGDTKLEIPLNSDFQDNYYKKVRALSLNAVDFQDAGIYSCVASNDVGTRTATMNFQVVESAYLNLTSEQSLLQEVSVGDSLILTVHADAYPSIQHYNWTYLGPFFEDQRKLEFITQRAIYRYTFKLFLNRVKASEAGQYFLMAQNKAGWNNLTFELTLRYPPEVSVTWMPVNGSDVLFCDVSGYPQPSVTWMECRGHTDRCDEAQALQVWNDTHPEVLSQKPFDKVIIQSQLPIGTLKHNMTYFCKTHNSVGNSSQYFRAVSLGQSKQLPDESLFTPVVVACMSVMSLLVLLLLLLLYKYKQKPKYQVRWKIIERYEGNSYTFIDPTQLPYNEKWEFPRNNLQFGKTLGAGAFGKVVEATAFGLGKEDAVLKVAVKMLKSTAHADEKEALMSELKIMSHLGQHENIVNLLGACTHGGPVLVITEYCCYGDLLNFLRRKAEAMLGPSLSPGQDSEGDSSYKNIHLEKKYVRRDSGFSSQGVDTYVEMRPVSTSSSDSFFKQDLDKEPSRPLELWDLLHFSSQVAQGMAFLASKNCIHRDVAARNVLLTSGHVAKIGDFGLARDIMNDSNYVVKGNARLPVKWMAPESILYCVYTVQSDVWSYGILLWEIFSLGLNPYPGILVNNKFYKLVKDGYQMAQPVFAPKNIYSIMQSCWDLEPTRRPTFQQICFLLQEQARLERRDQDYANLPSSGGSSGSDSGGGSSGGSSSEPEEESSSEHLACCEPGDIAQPLLQPNNYQFAC.

The N-terminal stretch at 1–19 is a signal peptide; it reads MELGPPLVLLLATVWHGQG. Topologically, residues 20–515 are extracellular; sequence APVIEPSGPE…QLPDESLFTP (496 aa). Ig-like C2-type domains are found at residues 24–104, 107–197, 204–298, 299–397, and 398–503; these read EPSG…VKDP, SWNL…KVNR, QIKL…VVES, AYLN…LTLR, and YPPE…SLGQ. 3 disulfide bridges follow: Cys-42/Cys-84, Cys-127/Cys-177, and Cys-224/Cys-278. N-linked (GlcNAc...) asparagine glycans are attached at residues Asn-45 and Asn-73. N-linked (GlcNAc...) asparagine glycosylation is found at Asn-302, Asn-335, Asn-389, Asn-410, Asn-449, Asn-478, and Asn-491. Cys-417 and Cys-483 are joined by a disulfide. A helical transmembrane segment spans residues 516-536; the sequence is VVVACMSVMSLLVLLLLLLLY. At 537-978 the chain is on the cytoplasmic side; the sequence is KYKQKPKYQV…LQPNNYQFAC (442 aa). A regulatory juxtamembrane domain region spans residues 540-572; sequence QKPKYQVRWKIIERYEGNSYTFIDPTQLPYNEK. 2 positions are modified to phosphotyrosine; by autocatalysis: Tyr-544 and Tyr-559. Residues 580–914 form the Protein kinase domain; the sequence is LQFGKTLGAG…CFLLQEQARL (335 aa). ATP-binding positions include 586 to 594 and Lys-614; that span reads LGAGAFGKV. Phosphotyrosine; by autocatalysis is present on residues Tyr-697 and Tyr-706. Residue Ser-711 is modified to Phosphoserine. Tyr-721 is modified (phosphotyrosine; by autocatalysis). Catalysis depends on Asp-776, which acts as the Proton acceptor. The interval 794-816 is activation loop; it reads DFGLARDIMNDSNYVVKGNARLP. Phosphotyrosine; by autocatalysis is present on residues Tyr-807 and Tyr-921. The segment at 921 to 957 is disordered; it reads YANLPSSGGSSGSDSGGGSSGGSSSEPEEESSSEHLA. Over residues 929–941 the composition is skewed to gly residues; sequence GSSGSDSGGGSSG. Tyr-974 is modified (phosphotyrosine; by autocatalysis).

This sequence belongs to the protein kinase superfamily. Tyr protein kinase family. CSF-1/PDGF receptor subfamily. Monomer. Homodimer. Interacts with CSF1 and IL34. Interaction with dimeric CSF1 or IL34 leads to receptor homodimerization. Interacts with INPPL1/SHIP2 and THOC5. Interacts (tyrosine phosphorylated) with PLCG2 (via SH2 domain). Interacts (tyrosine phosphorylated) with PIK3R1 (via SH2 domain). Interacts (tyrosine phosphorylated) with FYN, YES1 and SRC (via SH2 domain). Interacts (tyrosine phosphorylated) with CBL, GRB2 and SLA2. Post-translationally, autophosphorylated in response to CSF1 or IL34 binding. Phosphorylation at Tyr-559 is important for normal down-regulation of signaling by ubiquitination, internalization and degradation. Phosphorylation at Tyr-559 and Tyr-807 is important for interaction with SRC family members, including FYN, YES1 and SRC, and for subsequent activation of these protein kinases. Phosphorylation at Tyr-697 and Tyr-921 is important for interaction with GRB2. Phosphorylation at Tyr-721 is important for interaction with PIK3R1. Phosphorylation at Tyr-721 and Tyr-807 is important for interaction with PLCG2. Phosphorylation at Tyr-974 is important for interaction with CBL. Dephosphorylation by PTPN2 negatively regulates downstream signaling and macrophage differentiation. In terms of processing, ubiquitinated. Becomes rapidly polyubiquitinated after autophosphorylation, leading to its degradation.

The protein localises to the cell membrane. It carries out the reaction L-tyrosyl-[protein] + ATP = O-phospho-L-tyrosyl-[protein] + ADP + H(+). Its activity is regulated as follows. Present in an inactive conformation in the absence of bound ligand. CSF1 or IL34 binding leads to dimerization and activation by autophosphorylation on tyrosine residues. In terms of biological role, tyrosine-protein kinase that acts as a cell-surface receptor for CSF1 and IL34 and plays an essential role in the regulation of survival, proliferation and differentiation of hematopoietic precursor cells, especially mononuclear phagocytes, such as macrophages and monocytes. Promotes the release of pro-inflammatory chemokines in response to IL34 and CSF1, and thereby plays an important role in innate immunity and in inflammatory processes. Plays an important role in the regulation of osteoclast proliferation and differentiation, the regulation of bone resorption, and is required for normal bone and tooth development. Required for normal male and female fertility, and for normal development of milk ducts and acinar structures in the mammary gland during pregnancy. Promotes reorganization of the actin cytoskeleton, regulates formation of membrane ruffles, cell adhesion and cell migration, and promotes cancer cell invasion. Activates several signaling pathways in response to ligand binding, including the ERK1/2 and the JNK pathway. Phosphorylates PIK3R1, PLCG2, GRB2, SLA2 and CBL. Activation of PLCG2 leads to the production of the cellular signaling molecules diacylglycerol and inositol 1,4,5-trisphosphate, that then lead to the activation of protein kinase C family members, especially PRKCD. Phosphorylation of PIK3R1, the regulatory subunit of phosphatidylinositol 3-kinase, leads to activation of the AKT1 signaling pathway. Activated CSF1R also mediates activation of the MAP kinases MAPK1/ERK2 and/or MAPK3/ERK1, and of the SRC family kinases SRC, FYN and YES1. Activated CSF1R transmits signals both via proteins that directly interact with phosphorylated tyrosine residues in its intracellular domain, or via adapter proteins, such as GRB2. Promotes activation of STAT family members STAT3, STAT5A and/or STAT5B. Promotes tyrosine phosphorylation of SHC1 and INPP5D/SHIP-1. Receptor signaling is down-regulated by protein phosphatases, such as INPP5D/SHIP-1, that dephosphorylate the receptor and its downstream effectors, and by rapid internalization of the activated receptor. In the central nervous system, may play a role in the development of microglia macrophages. The protein is Macrophage colony-stimulating factor 1 receptor (Csf1r) of Rattus norvegicus (Rat).